Consider the following 281-residue polypeptide: Transcription factor bHLH79 (281 aa).

The disordered stretch occupies residues F47–A167. Basic and acidic residues-rich tracts occupy residues K77–S88 and T138–H152. The 51-residue stretch at Q159–L209 folds into the bHLH domain.

In terms of assembly, homodimer.

It is found in the nucleus. The protein is Transcription factor bHLH79 (BHLH79) of Arabidopsis thaliana (Mouse-ear cress).